A 322-amino-acid chain; its full sequence is AA9 family lytic polysaccharide monooxygenase A (322 aa).

The N-terminal stretch at M1–A15 is a signal peptide. Cu(2+)-binding residues include H16 and H96. 2 cysteine pairs are disulfide-bonded: C54-C182 and C152-C237. 2 residues coordinate O2: H168 and Q177. O-linked (Man...) threonine glycans are attached at residues T228 and T236. The 37-residue stretch at C286–S322 folds into the CBM1 domain.

Belongs to the polysaccharide monooxygenase AA9 family. It depends on Cu(2+) as a cofactor.

The protein localises to the secreted. The enzyme catalyses [(1-&gt;4)-beta-D-glucosyl]n+m + reduced acceptor + O2 = 4-dehydro-beta-D-glucosyl-[(1-&gt;4)-beta-D-glucosyl]n-1 + [(1-&gt;4)-beta-D-glucosyl]m + acceptor + H2O.. Functionally, lytic polysaccharide monooxygenase (LPMO) that depolymerizes crystalline and amorphous polysaccharides via the oxidation of scissile alpha- or beta-(1-4)-glycosidic bonds, yielding C4 oxidation products. Catalysis by LPMOs requires the reduction of the active-site copper from Cu(II) to Cu(I) by a reducing agent and H(2)O(2) or O(2) as a cosubstrate. Active on tamarind xyloglucan and konjac glucomannan. This chain is AA9 family lytic polysaccharide monooxygenase A (gh61-1), found in Neurospora crassa (strain ATCC 24698 / 74-OR23-1A / CBS 708.71 / DSM 1257 / FGSC 987).